Reading from the N-terminus, the 396-residue chain is Tryptophan synthase beta chain (396 aa).

Lys86 bears the N6-(pyridoxal phosphate)lysine mark.

The protein belongs to the TrpB family. Tetramer of two alpha and two beta chains. The cofactor is pyridoxal 5'-phosphate.

The enzyme catalyses (1S,2R)-1-C-(indol-3-yl)glycerol 3-phosphate + L-serine = D-glyceraldehyde 3-phosphate + L-tryptophan + H2O. It functions in the pathway amino-acid biosynthesis; L-tryptophan biosynthesis; L-tryptophan from chorismate: step 5/5. Its function is as follows. The beta subunit is responsible for the synthesis of L-tryptophan from indole and L-serine. The sequence is that of Tryptophan synthase beta chain from Vibrio campbellii (strain ATCC BAA-1116).